Here is a 345-residue protein sequence, read N- to C-terminus: MISPVLKKYARPSLWYRFCAWVASKKNRLYVGWFGVLMIPTLLTAATVFIIAFIAAPPVDIDGIREPVSGSLFYGNNIITGAVVPTSNAIGLHFYPIWEATSLDEWLYNGGPYQLIVCHFFIGICSYMGREWELSFRLGMRPWIAVAYSAPVAAASAVFIVYPLGQGSFSDGMPLGISGTFNFMIVFQAEHNILMHPFHMLGVAGVFGGSLFSAMHGSLVTSSLLRETTENESINVGYKFGQEEETYNIIAAHAYFGRLIFQYASFNNSRSLHFFLAVWPVVGIWFTALGVSTMAFNLNGFNFNQSVIDSQGRVINTWADIINRANLGMEVMHERNAHNFPLDLA.

The next 3 membrane-spanning stretches (helical) occupy residues 30–47 (YVGWFGVLMIPTLLTAAT), 119–134 (HFFIGICSYMGREWEL), and 143–157 (WIAVAYSAPVAAASA). His119 lines the chlorophyll a pocket. Tyr127 contacts pheophytin a. [CaMn4O5] cluster contacts are provided by Asp171 and Glu190. A helical transmembrane segment spans residues 198–219 (FHMLGVAGVFGGSLFSAMHGSL). His199 provides a ligand contact to chlorophyll a. Residues His216 and 265 to 266 (SF) each bind a quinone. Residue His216 participates in Fe cation binding. A Fe cation-binding site is contributed by His273. A helical transmembrane segment spans residues 275 to 289 (FLAVWPVVGIWFTAL). 4 residues coordinate [CaMn4O5] cluster: His333, Glu334, Asp343, and Ala345.

The protein belongs to the reaction center PufL/M/PsbA/D family. In terms of assembly, PSII is composed of 1 copy each of membrane proteins PsbA, PsbB, PsbC, PsbD, PsbE, PsbF, PsbH, PsbI, PsbJ, PsbK, PsbL, PsbM, PsbT, PsbY, PsbZ, Psb30/Ycf12, at least 3 peripheral proteins of the oxygen-evolving complex and a large number of cofactors. It forms dimeric complexes. The cofactor is The D1/D2 heterodimer binds P680, chlorophylls that are the primary electron donor of PSII, and subsequent electron acceptors. It shares a non-heme iron and each subunit binds pheophytin, quinone, additional chlorophylls, carotenoids and lipids. D1 provides most of the ligands for the Mn4-Ca-O5 cluster of the oxygen-evolving complex (OEC). There is also a Cl(-1) ion associated with D1 and D2, which is required for oxygen evolution. The PSII complex binds additional chlorophylls, carotenoids and specific lipids.. Post-translationally, tyr-162 forms a radical intermediate that is referred to as redox-active TyrZ, YZ or Y-Z.

Its subcellular location is the plastid. It localises to the chloroplast thylakoid membrane. The enzyme catalyses 2 a plastoquinone + 4 hnu + 2 H2O = 2 a plastoquinol + O2. Its function is as follows. Photosystem II (PSII) is a light-driven water:plastoquinone oxidoreductase that uses light energy to abstract electrons from H(2)O, generating O(2) and a proton gradient subsequently used for ATP formation. It consists of a core antenna complex that captures photons, and an electron transfer chain that converts photonic excitation into a charge separation. The D1/D2 (PsbA/PsbD) reaction center heterodimer binds P680, the primary electron donor of PSII as well as several subsequent electron acceptors. This is Photosystem II protein D1 from Euglena gracilis.